The primary structure comprises 323 residues: GTP 3',8-cyclase (323 aa).

Residues 5-228 (GFGRKVDYLR…TVLRDTSSPA (224 aa)) form the Radical SAM core domain. Arg14 serves as a coordination point for GTP. Positions 21 and 25 each coordinate [4Fe-4S] cluster. Tyr27 contacts S-adenosyl-L-methionine. [4Fe-4S] cluster is bound at residue Cys28. Residue Arg64 coordinates GTP. Gly68 provides a ligand contact to S-adenosyl-L-methionine. Thr95 provides a ligand contact to GTP. Ser119 is a binding site for S-adenosyl-L-methionine. Lys155 is a binding site for GTP. Residue Met189 participates in S-adenosyl-L-methionine binding. Positions 250 and 253 each coordinate [4Fe-4S] cluster. GTP is bound at residue 255–257 (RIR). Cys267 is a [4Fe-4S] cluster binding site. The segment covering 302–313 (KNKWSQKDDNEV) has biased composition (basic and acidic residues). Positions 302–323 (KNKWSQKDDNEVSTRAFYQTGG) are disordered.

This sequence belongs to the radical SAM superfamily. MoaA family. In terms of assembly, monomer and homodimer. The cofactor is [4Fe-4S] cluster.

It catalyses the reaction GTP + AH2 + S-adenosyl-L-methionine = (8S)-3',8-cyclo-7,8-dihydroguanosine 5'-triphosphate + 5'-deoxyadenosine + L-methionine + A + H(+). It functions in the pathway cofactor biosynthesis; molybdopterin biosynthesis. Catalyzes the cyclization of GTP to (8S)-3',8-cyclo-7,8-dihydroguanosine 5'-triphosphate. In Aliarcobacter butzleri (strain RM4018) (Arcobacter butzleri), this protein is GTP 3',8-cyclase.